Reading from the N-terminus, the 834-residue chain is MPSHSRSRDRYGGRDSDREARYDYDYARRRYATDDNDDDYDDDELEHGLNERRYRRDGYLPPRESRTRGYYERDAEGAADEELLGDERNPGPRASRSYGHDYDARRGERSRAREAPRRSERHRDRDREGQSRRRAYEDDGRHRTRDGRRERGRESDAEARRSRRREAGRETAARKHQSSDSTNSASHLLSADALARLGAQYEKEERRKRENAKDAAKAERKRQKKRAVVGEESRALRDPPGESHRDRTKARVASGAYLEEGRSPEMQVRHRGGGGPAMEARWRKEGSWGGTMDDAGGGRPFWKRKKWIGLGALILILVIVIPVAVVVSKKHDNKSDPADPQGTSPGKSNLDGLSHDSIPAYAQGTYLDPWTWYDTTDFNVTFTNETVGGLSIMGLNSTWDDSARPNDNVPPLNEPFPYGSQPIRGVNLGGWLSIEPFIVPSLFDSYSSVAGIIDEWTLSKRLGSSAARTLEKHYATFITEQDFADIRDAGLDHVRIQYSYWAVATYDDDPYVAKISWRYLLRAIEYCRKYGLRVKLDPHGIPGSQNGWNHSGREGVIGWLNGTDGELNRNRSLAVHDSVSKFFAQDRYKNIVTIYGLVNEPLMLSLSVEDVLDWTTEATKLVQKNGITAYVALHDGFLNLSKWKSMLKNRPDKMLLDTHQYTIFNTGQIGLNHTAKVNLICNDWYNMIKEINSTSTGWGPTICGEWSQADTDCAKYLNNVGRGTRWEGTFSLTDSTQYCPTADTGPPCSCANANADVSEYSADYKKFLQTYAEAQMSAFETGQGWFYWTWRTESAAQWSYRTAWKNGFMPAKAYAPSFKCGDAVPDFGNLPEYY.

Residues 1 to 33 are compositionally biased toward basic and acidic residues; that stretch reads MPSHSRSRDRYGGRDSDREARYDYDYARRRYAT. 2 disordered regions span residues 1–188 and 200–251; these read MPSH…ASHL and QYEK…TKAR. Over 1–306 the chain is Cytoplasmic; it reads MPSHSRSRDR…GGRPFWKRKK (306 aa). Over residues 34–45 the composition is skewed to acidic residues; the sequence is DDNDDDYDDDEL. 4 stretches are compositionally biased toward basic and acidic residues: residues 46 to 76, 98 to 173, 201 to 218, and 228 to 245; these read EHGLNERRYRRDGYLPPRESRTRGYYERDAE, YGHD…ETAA, YEKEERRKRENAKDAAKA, and VVGEESRALRDPPGESHR. The chain crosses the membrane as a helical; Signal-anchor for type II membrane protein span at residues 307 to 327; it reads WIGLGALILILVIVIPVAVVV. Residues 328-834 are Extracellular-facing; the sequence is SKKHDNKSDP…PDFGNLPEYY (507 aa). The disordered stretch occupies residues 331-354; the sequence is HDNKSDPADPQGTSPGKSNLDGLS. N-linked (GlcNAc...) asparagine glycans are attached at residues N333, N379, N384, N396, N549, N561, and N570. Catalysis depends on E600, which acts as the Proton donor. N639, N672, and N692 each carry an N-linked (GlcNAc...) asparagine glycan. E705 serves as the catalytic Nucleophile.

This sequence belongs to the glycosyl hydrolase 5 (cellulase A) family.

It is found in the cell membrane. The catalysed reaction is Successive hydrolysis of beta-D-glucose units from the non-reducing ends of (1-&gt;3)-beta-D-glucans, releasing alpha-glucose.. Functionally, glucosidase involved in the degradation of cellulosic biomass. Active on lichenan. The protein is Probable glucan 1,3-beta-glucosidase D (exgD) of Neosartorya fischeri (strain ATCC 1020 / DSM 3700 / CBS 544.65 / FGSC A1164 / JCM 1740 / NRRL 181 / WB 181) (Aspergillus fischerianus).